Here is a 263-residue protein sequence, read N- to C-terminus: 3'-5' ssDNA/RNA exonuclease TatD (263 aa).

The a divalent metal cation site is built by Glu-91, His-127, and His-152.

It belongs to the metallo-dependent hydrolases superfamily. TatD-type hydrolase family. TatD subfamily. As to quaternary structure, monomer. The cofactor is Mg(2+).

It localises to the cytoplasm. Its function is as follows. 3'-5' exonuclease that prefers single-stranded DNA and RNA. May play a role in the H(2)O(2)-induced DNA damage repair. In Citrobacter rodentium (strain ICC168) (Citrobacter freundii biotype 4280), this protein is 3'-5' ssDNA/RNA exonuclease TatD.